Here is a 414-residue protein sequence, read N- to C-terminus: Gamma-glutamyl phosphate reductase (414 aa).

This sequence belongs to the gamma-glutamyl phosphate reductase family.

It is found in the cytoplasm. The catalysed reaction is L-glutamate 5-semialdehyde + phosphate + NADP(+) = L-glutamyl 5-phosphate + NADPH + H(+). It functions in the pathway amino-acid biosynthesis; L-proline biosynthesis; L-glutamate 5-semialdehyde from L-glutamate: step 2/2. Functionally, catalyzes the NADPH-dependent reduction of L-glutamate 5-phosphate into L-glutamate 5-semialdehyde and phosphate. The product spontaneously undergoes cyclization to form 1-pyrroline-5-carboxylate. The protein is Gamma-glutamyl phosphate reductase of Xanthomonas axonopodis pv. citri (strain 306).